A 335-amino-acid polypeptide reads, in one-letter code: Lipase chaperone (335 aa).

Residues 7-23 (LLPLAIALGLGFFIARP) traverse the membrane as a helical segment.

This sequence belongs to the lipase chaperone family.

It localises to the cell inner membrane. Functionally, may be involved in the folding of the extracellular lipase during its passage through the periplasm. The protein is Lipase chaperone (lifO) of Ectopseudomonas mendocina (Pseudomonas mendocina).